Consider the following 353-residue polypeptide: Pupal cuticle protein PCP52 (353 aa).

A signal peptide spans 1–15 (MRVLILSAFIACATA). The interval 166-195 (AEAPEGNKDEGNKDSVQVESSATESESDKA) is disordered. Residues 179–189 (DSVQVESSATE) are compositionally biased toward polar residues.

Its function is as follows. Component of the cuticle of the pupa of Galleria mellonella. This Galleria mellonella (Greater wax moth) protein is Pupal cuticle protein PCP52 (PCP52).